Reading from the N-terminus, the 572-residue chain is Proline--tRNA ligase (572 aa).

This sequence belongs to the class-II aminoacyl-tRNA synthetase family. ProS type 1 subfamily. As to quaternary structure, homodimer.

It localises to the cytoplasm. It catalyses the reaction tRNA(Pro) + L-proline + ATP = L-prolyl-tRNA(Pro) + AMP + diphosphate. Catalyzes the attachment of proline to tRNA(Pro) in a two-step reaction: proline is first activated by ATP to form Pro-AMP and then transferred to the acceptor end of tRNA(Pro). As ProRS can inadvertently accommodate and process non-cognate amino acids such as alanine and cysteine, to avoid such errors it has two additional distinct editing activities against alanine. One activity is designated as 'pretransfer' editing and involves the tRNA(Pro)-independent hydrolysis of activated Ala-AMP. The other activity is designated 'posttransfer' editing and involves deacylation of mischarged Ala-tRNA(Pro). The misacylated Cys-tRNA(Pro) is not edited by ProRS. This Caldicellulosiruptor bescii (strain ATCC BAA-1888 / DSM 6725 / KCTC 15123 / Z-1320) (Anaerocellum thermophilum) protein is Proline--tRNA ligase.